The chain runs to 63 residues: Large ribosomal subunit protein uL29 (63 aa).

It belongs to the universal ribosomal protein uL29 family.

This chain is Large ribosomal subunit protein uL29, found in Listeria innocua serovar 6a (strain ATCC BAA-680 / CLIP 11262).